We begin with the raw amino-acid sequence, 269 residues long: tRNA pseudouridine synthase A (269 aa).

The active-site Nucleophile is D55. Residue Y111 coordinates substrate.

The protein belongs to the tRNA pseudouridine synthase TruA family.

It carries out the reaction uridine(38/39/40) in tRNA = pseudouridine(38/39/40) in tRNA. In terms of biological role, formation of pseudouridine at positions 38, 39 and 40 in the anticodon stem and loop of transfer RNAs. The protein is tRNA pseudouridine synthase A of Methanosarcina acetivorans (strain ATCC 35395 / DSM 2834 / JCM 12185 / C2A).